Reading from the N-terminus, the 346-residue chain is LRP2-binding protein (346 aa).

A TPR repeat occupies 58 to 91 (AMAYFLRGQLYFEEGWYEEALAQFEEIQEKDHQA). Sel1-like repeat units follow at residues 92-124 (IYQLGVMYYDGLGTIANAEKGVNYMRKILDSSC), 132-167 (FAAAYNLGRAYFEGKGVKRSDEEAERLWLLAADNGN), 172-205 (VKAQSILGLFYSMKEPKELEKAFFWHSEACGNGS), 206-241 (LESQGALGLMYFYGQGIRQDTDAALHCLREAAERGN), 242-276 (VYAQGTLVEYYYKMKFFTKCVSFSKRIADYDEVHD), and 296-331 (AMAAFYHGRCLQLGLGIMKDEESAKHYYSKACRLNP).

In terms of assembly, interacts with LRP2.

The protein resides in the cytoplasm. Its function is as follows. May act as an adapter that regulates LRP2 function. This Mus musculus (Mouse) protein is LRP2-binding protein (Lrp2bp).